The following is a 112-amino-acid chain: DIVLTQSPASLAVSLGQRATISCRASZSVNWYGNSFMZWYZZKPGZPPKLLIYRASNLZSGIPARFSGSGSRTBFTLTIBPVZABDVATYFCZZSBZAPWTFGSGTKLEIKR.

A framework-1 region spans residues 1 to 23 (DIVLTQSPASLAVSLGQRATISC). An intrachain disulfide couples Cys23 to Cys92. Residues 24–38 (RASZSVNWYGNSFMZ) are complementarity-determining-1. The interval 39 to 53 (WYZZKPGZPPKLLIY) is framework-2. The segment at 54-60 (RASNLZS) is complementarity-determining-2. A framework-3 region spans residues 61 to 92 (GIPARFSGSGSRTBFTLTIBPVZABDVATYFC). Residues 93–101 (ZZSBZAPWT) are complementarity-determining-3. Positions 102-111 (FGSGTKLEIK) are framework-4.

The sequence is that of Ig kappa chain V-III region TEPC 124 from Mus musculus (Mouse).